The following is a 151-amino-acid chain: UPF0208 membrane protein SG1605 (151 aa).

A run of 2 helical transmembrane segments spans residues 46–64 and 70–90; these read FGVR…WQIA and GPAV…LWWL.

The protein belongs to the UPF0208 family.

It is found in the cell inner membrane. The polypeptide is UPF0208 membrane protein SG1605 (Sodalis glossinidius (strain morsitans)).